The sequence spans 114 residues: Gas vesicle protein J (114 aa).

A disordered region spans residues 63–114 (PTGTDMERVEEAAGISPDESRSLDTRSESEQMDELPGEAGASVSNTAPQEEE). Positions 80–91 (DESRSLDTRSES) are enriched in basic and acidic residues. A compositionally biased stretch (polar residues) spans 104-114 (SVSNTAPQEEE).

This sequence belongs to the gas vesicle GvpA family. GvpF to GvpM interact with each other in vitro, and may form multi-subunit complex(es). Interacts with GvpA.

The protein resides in the gas vesicle. In terms of biological role, a minor component of the gas vesicle, proteins GvpF to GvpM might be involved in nucleating gas vesicle formation. Gas vesicles are hollow, gas filled proteinaceous nanostructures found in some microorganisms. They allow positioning of halobacteria at the optimal depth for growth in the poorly aerated, shallow brine pools of their habitat. Expression of a 9.5 kb mc-vac DNA fragment containing 2 divergently transcribed regions (gvpD-gvpE-gvpF-gvpG-gvpH-gvpI-gvpJ-gvpK-gvpL-gvpM and gvpA-gvpC-gvpN-gvpO) allows H.volcanii to produce gas vesicles. The chain is Gas vesicle protein J from Haloferax mediterranei (strain ATCC 33500 / DSM 1411 / JCM 8866 / NBRC 14739 / NCIMB 2177 / R-4) (Halobacterium mediterranei).